The following is a 382-amino-acid chain: 1-deoxy-D-xylulose 5-phosphate reductoisomerase (382 aa).

Residues Thr10, Gly11, Ser12, Ile13, Asn38, and Asn120 each contribute to the NADPH site. A 1-deoxy-D-xylulose 5-phosphate-binding site is contributed by Lys121. Glu122 lines the NADPH pocket. Residue Asp146 coordinates Mn(2+). Ser147, Glu148, Ser172, and His195 together coordinate 1-deoxy-D-xylulose 5-phosphate. Glu148 provides a ligand contact to Mn(2+). Residue Gly201 participates in NADPH binding. 1-deoxy-D-xylulose 5-phosphate contacts are provided by Ser208, Asn213, Lys214, and Glu217. Glu217 serves as a coordination point for Mn(2+).

Belongs to the DXR family. Requires Mg(2+) as cofactor. Mn(2+) serves as cofactor.

It catalyses the reaction 2-C-methyl-D-erythritol 4-phosphate + NADP(+) = 1-deoxy-D-xylulose 5-phosphate + NADPH + H(+). It functions in the pathway isoprenoid biosynthesis; isopentenyl diphosphate biosynthesis via DXP pathway; isopentenyl diphosphate from 1-deoxy-D-xylulose 5-phosphate: step 1/6. Catalyzes the NADPH-dependent rearrangement and reduction of 1-deoxy-D-xylulose-5-phosphate (DXP) to 2-C-methyl-D-erythritol 4-phosphate (MEP). The sequence is that of 1-deoxy-D-xylulose 5-phosphate reductoisomerase from Caldanaerobacter subterraneus subsp. tengcongensis (strain DSM 15242 / JCM 11007 / NBRC 100824 / MB4) (Thermoanaerobacter tengcongensis).